The chain runs to 288 residues: Solute carrier family 25 member 47-B (288 aa).

3 Solcar repeats span residues 1-83, 99-191, and 199-286; these read MHLA…ILQF, AHIF…ICEI, and PGWP…VVRL. 6 consecutive transmembrane segments (helical) span residues 3–23, 58–75, 101–121, 175–195, 199–219, and 257–277; these read LADFLAGSVGGAFGVAVGYPL, GMSMPISTVSISSSLVFG, IFLAGFTGGVTQVLVMAPADI, GPSFATYFLTYNTICEILTTE, PGWPVVLLAGGVSGMCGWAVG, and VLFRGLTVNCIRAFPVNMSVF.

It belongs to the mitochondrial carrier (TC 2.A.29) family.

The protein localises to the mitochondrion inner membrane. The sequence is that of Solute carrier family 25 member 47-B (slc25a47b) from Danio rerio (Zebrafish).